Reading from the N-terminus, the 902-residue chain is Methionine--tRNA ligase, cytoplasmic (902 aa).

A GST C-terminal domain is found at 74–212 (GWEQDDLTNQ…QKQPQPQPPP (139 aa)). The 'HIGH' region motif lies at 275-285 (PYVNNVPHLGN). A 'KMSKS' region motif is present at residues 595 to 599 (KFSKS). K598 contacts ATP. S827 bears the Phosphoserine mark. Position 837 is a phosphothreonine (T837). Positions 843-899 (HIQTLTDEVTKQGNVVRELKAQKADKNQVAAEVAKLLDLKKQLALAEGKPIETPKGK) constitute a WHEP-TRS domain.

The protein belongs to the class-I aminoacyl-tRNA synthetase family. In terms of assembly, monomer. Part of a multisubunit complex that groups tRNA ligases for Arg (RARS1), Asp (DARS1), Gln (QARS1), Ile (IARS1), Leu (LARS1), Lys (KARS1), Met (MARS1) the bifunctional ligase for Glu and Pro (EPRS1) and the auxiliary subunits AIMP1/p43, AIMP2/p38 and EEF1E1/p18. Forms a linear complex that contains MARS1, EEF1E1, EPRS1 and AIMP2 that is at the core of the multisubunit complex.

Its subcellular location is the cytoplasm. The protein resides in the cytosol. It is found in the nucleus. It localises to the nucleolus. It catalyses the reaction tRNA(Met) + L-methionine + ATP = L-methionyl-tRNA(Met) + AMP + diphosphate. Catalyzes the specific attachment of an amino acid to its cognate tRNA in a 2 step reaction: the amino acid (AA) is first activated by ATP to form AA-AMP and then transferred to the acceptor end of the tRNA. Plays a role in the synthesis of ribosomal RNA in the nucleolus. This is Methionine--tRNA ligase, cytoplasmic (Mars1) from Mus musculus (Mouse).